A 611-amino-acid polypeptide reads, in one-letter code: Glutamine--fructose-6-phosphate aminotransferase [isomerizing] (611 aa).

Cysteine 2 serves as the catalytic Nucleophile; for GATase activity. One can recognise a Glutamine amidotransferase type-2 domain in the interval 2-219; it reads CGIVGAVAER…EGDIAEIRRD (218 aa). 2 consecutive SIS domains span residues 287–427 and 460–601; these read AAEL…VKGS and VAEL…VDQP. Lysine 606 serves as the catalytic For Fru-6P isomerization activity.

As to quaternary structure, homodimer.

Its subcellular location is the cytoplasm. It carries out the reaction D-fructose 6-phosphate + L-glutamine = D-glucosamine 6-phosphate + L-glutamate. Catalyzes the first step in hexosamine metabolism, converting fructose-6P into glucosamine-6P using glutamine as a nitrogen source. This chain is Glutamine--fructose-6-phosphate aminotransferase [isomerizing], found in Pseudomonas syringae pv. tomato (strain ATCC BAA-871 / DC3000).